Consider the following 2145-residue polypeptide: Mediator of RNA polymerase II transcription subunit 12-like protein (2145 aa).

The segment at 1 to 30 is disordered; it reads MAAFGLLSYEQRPLKRPRLGPPDVYPQDPK. At Thr462 the chain carries Phosphothreonine. The span at 1436-1455 shows a compositional bias: basic and acidic residues; that stretch reads ELEKGQHLGSSSKKERDRQK. Disordered regions lie at residues 1436–1460, 1721–1802, and 2029–2145; these read ELEK…KSMS, RSYY…ISSQ, and DAVL…PSHF. Basic residues predominate over residues 1768–1777; sequence TKGRKRKTKS. Over residues 2052–2069 the composition is skewed to low complexity; the sequence is RQPQVRQQQRLLQMQQPQ. Residues 2070–2079 are compositionally biased toward pro residues; the sequence is QPQPQQPPQP. The span at 2089–2099 shows a compositional bias: polar residues; that stretch reads TLGLQAMQPQQ. A compositionally biased stretch (low complexity) spans 2104-2124; the sequence is RQGLQQTQQQQQTAALVRQLQ. Over residues 2125-2136 the composition is skewed to polar residues; it reads KQLSSNQPQQGV.

The protein belongs to the Mediator complex subunit 12 family. May be a component of the Mediator complex, which is known to be composed of MED1, MED4, MED6, MED7, MED8, MED9, MED10, MED11, MED12, MED13, MED13L, MED14, MED15, MED16, MED17, MED18, MED19, MED20, MED21, MED22, MED23, MED24, MED25, MED26, MED27, MED29, MED30, MED31, CCNC, CDK8 and CDC2L6/CDK11. The MED12, MED13, CCNC and CDK8 subunits form a distinct module termed the CDK8 module. Mediator containing the CDK8 module is less active than Mediator lacking this module in supporting transcriptional activation. Individual preparations of the Mediator complex lacking one or more distinct subunits have been variously termed ARC, CRSP, DRIP, PC2, SMCC and TRAP.

Its subcellular location is the nucleus. In terms of biological role, may be a component of the Mediator complex, a coactivator involved in the regulated transcription of nearly all RNA polymerase II-dependent genes. Mediator functions as a bridge to convey information from gene-specific regulatory proteins to the basal RNA polymerase II transcription machinery. Mediator is recruited to promoters by direct interactions with regulatory proteins and serves as a scaffold for the assembly of a functional preinitiation complex with RNA polymerase II and the general transcription factors. The protein is Mediator of RNA polymerase II transcription subunit 12-like protein (MED12L) of Homo sapiens (Human).